A 237-amino-acid chain; its full sequence is MTDPENNDQLVKSSDPEHPANLIPELCKKFYTLGWVTGTGGGTSIRRGDHIFIAPSGVQKEMIKSEDIFVLSYPTPKYPPSARQYIRKPRELKPSACTPLFLAAFDRGAGCSIHTHSQWAVLVTLLVEREKGKNGCFEINNIEQIKGIPKGKGKGMLGYFDTLRIPIIENTAFEEDLTESLEQAMDEYPDTYAVLVRRHGIYVWGDTPAKAKTQCESLDYLFQLAVEMHKLGIPWIQ.

Residue C97 coordinates substrate. The Zn(2+) site is built by H114 and H116. E143 acts as the Proton donor/acceptor in catalysis. H199 is a Zn(2+) binding site.

It belongs to the aldolase class II family. MtnB subfamily. Zn(2+) serves as cofactor.

Its subcellular location is the cytoplasm. It catalyses the reaction 5-(methylsulfanyl)-D-ribulose 1-phosphate = 5-methylsulfanyl-2,3-dioxopentyl phosphate + H2O. Its pathway is amino-acid biosynthesis; L-methionine biosynthesis via salvage pathway; L-methionine from S-methyl-5-thio-alpha-D-ribose 1-phosphate: step 2/6. In terms of biological role, catalyzes the dehydration of methylthioribulose-1-phosphate (MTRu-1-P) into 2,3-diketo-5-methylthiopentyl-1-phosphate (DK-MTP-1-P). The polypeptide is Methylthioribulose-1-phosphate dehydratase (Coccidioides posadasii (strain C735) (Valley fever fungus)).